A 256-amino-acid polypeptide reads, in one-letter code: Small ribosomal subunit protein eS1 (256 aa).

Positions 1 to 18 (MAVGKNKRLSKGKKGLKK) are enriched in basic residues. The disordered stretch occupies residues 1–20 (MAVGKNKRLSKGKKGLKKKA). Alanine 2 is subject to N-acetylalanine; partial.

Belongs to the eukaryotic ribosomal protein eS1 family. In terms of assembly, component of the small ribosomal subunit. Mature ribosomes consist of a small (40S) and a large (60S) subunit. The 40S subunit contains about 33 different proteins and 1 molecule of RNA (18S). The 60S subunit contains about 49 different proteins and 3 molecules of RNA (25S, 5.8S and 5S).

It localises to the cytoplasm. The sequence is that of Small ribosomal subunit protein eS1 from Podospora anserina (strain S / ATCC MYA-4624 / DSM 980 / FGSC 10383) (Pleurage anserina).